The chain runs to 261 residues: 5'-nucleotidase SurE (261 aa).

A divalent metal cation-binding residues include Asp10, Asp11, Ser41, and Asn96.

The protein belongs to the SurE nucleotidase family. Requires a divalent metal cation as cofactor.

The protein localises to the cytoplasm. The catalysed reaction is a ribonucleoside 5'-phosphate + H2O = a ribonucleoside + phosphate. In terms of biological role, nucleotidase that shows phosphatase activity on nucleoside 5'-monophosphates. The protein is 5'-nucleotidase SurE of Methanococcoides burtonii (strain DSM 6242 / NBRC 107633 / OCM 468 / ACE-M).